An 804-amino-acid polypeptide reads, in one-letter code: Probable exo-1,4-beta-xylosidase xlnD (804 aa).

The N-terminal stretch at 1-26 is a signal peptide; sequence MAHSMSRPVAATAAALLALALPQALA. N-linked (GlcNAc...) asparagine glycans are attached at residues asparagine 29, asparagine 124, asparagine 148, asparagine 242, and asparagine 251. Residue aspartate 315 is part of the active site. 10 N-linked (GlcNAc...) asparagine glycosylation sites follow: asparagine 357, asparagine 390, asparagine 413, asparagine 444, asparagine 455, asparagine 573, asparagine 576, asparagine 665, asparagine 696, and asparagine 718.

This sequence belongs to the glycosyl hydrolase 3 family.

The protein resides in the secreted. It catalyses the reaction Hydrolysis of (1-&gt;4)-beta-D-xylans, to remove successive D-xylose residues from the non-reducing termini.. The protein operates within glycan degradation; xylan degradation. Its function is as follows. Xylan 1,4-beta-xylosidase involved in the hydrolysis of xylan, a major structural heterogeneous polysaccharide found in plant biomass representing the second most abundant polysaccharide in the biosphere, after cellulose. This Aspergillus niger (strain ATCC MYA-4892 / CBS 513.88 / FGSC A1513) protein is Probable exo-1,4-beta-xylosidase xlnD (xlnD).